The following is a 163-amino-acid chain: uncharacterized protein (163 aa).

This is an uncharacterized protein from Methanocaldococcus jannaschii (strain ATCC 43067 / DSM 2661 / JAL-1 / JCM 10045 / NBRC 100440) (Methanococcus jannaschii).